The sequence spans 563 residues: NAD-dependent malic enzyme (563 aa).

The active-site Proton donor is the Tyr-101. Residue Arg-154 participates in NAD(+) binding. The active-site Proton acceptor is the Lys-172. Glu-243, Asp-244, and Asp-267 together coordinate a divalent metal cation. NAD(+) contacts are provided by Asp-267 and Asn-416.

This sequence belongs to the malic enzymes family. Homotetramer. It depends on Mg(2+) as a cofactor. Mn(2+) serves as cofactor.

It catalyses the reaction (S)-malate + NAD(+) = pyruvate + CO2 + NADH. It carries out the reaction oxaloacetate + H(+) = pyruvate + CO2. This chain is NAD-dependent malic enzyme, found in Pseudomonas syringae pv. tomato (strain ATCC BAA-871 / DC3000).